The primary structure comprises 99 residues: Late cornified envelope protein 4A (99 aa).

A disordered region spans residues 78–99; that stretch reads CYGSGSGQQSGGSGCCSGGGCC. Over residues 81-99 the composition is skewed to gly residues; that stretch reads SGSGQQSGGSGCCSGGGCC.

This sequence belongs to the LCE family. In terms of assembly, interacts with CYSRT1; the interaction is direct. As to expression, skin-specific. Expression was readily detected in adult trunk skin, adult arm skin, fetal skin, penal skin, vulva, esophagus and tongue. Not expressed in the cervix, rectum, lung, colon, or placenta.

Precursors of the cornified envelope of the stratum corneum. In Homo sapiens (Human), this protein is Late cornified envelope protein 4A (LCE4A).